Here is a 199-residue protein sequence, read N- to C-terminus: Phosphatidylethanolamine N-methyltransferase (199 aa).

Topologically, residues 1 to 12 (MTRLLGYVDPLD) are lumenal. The segment at residues 13-33 (PSFVAAVITITFNPLYWNVVA) is an intramembrane region (helical). Residues 34 to 45 (RWEHKTRKLSRA) are Lumenal-facing. Residues 46 to 66 (FGSPYLACYSLSVTILLLNFL) form a helical membrane-spanning segment. Over 67–93 (RSHCFTQAMLSQPRMESLDTPAAYSLG) the chain is Cytoplasmic. The helical transmembrane segment at 94 to 114 (LALLGLGVVLVLSSFFALGFA) threads the bilayer. Residue 98–100 (GLG) participates in S-adenosyl-L-methionine binding. Residues 115-157 (GTFLGDYFGILKEARVTVFPFNILDNPMYWGSTANYLGWAIMH) lie on the Lumenal side of the membrane. The helical transmembrane segment at 158–178 (ASPTGLLLTVLVALTYIVALL) threads the bilayer. The Cytoplasmic portion of the chain corresponds to 179-199 (YEEPFTAEIYRQKASGSHKRS). Residue 180–181 (EE) coordinates S-adenosyl-L-methionine.

This sequence belongs to the class VI-like SAM-binding methyltransferase superfamily. PEMT/PEM2 methyltransferase family. Post-translationally, isoform 2 is N-glycosylated with high-mannose oligosaccharides. In terms of tissue distribution, primarily expressed in liver (at protein level).

The protein localises to the endoplasmic reticulum. It localises to the endoplasmic reticulum membrane. The protein resides in the mitochondrion membrane. The catalysed reaction is a 1,2-diacyl-sn-glycero-3-phospho-N-methylethanolamine + S-adenosyl-L-methionine = a 1,2-diacyl-sn-glycero-3-phospho-N,N-dimethylethanolamine + S-adenosyl-L-homocysteine + H(+). It carries out the reaction a 1,2-diacyl-sn-glycero-3-phospho-N,N-dimethylethanolamine + S-adenosyl-L-methionine = a 1,2-diacyl-sn-glycero-3-phosphocholine + S-adenosyl-L-homocysteine + H(+). It catalyses the reaction a 1,2-diacyl-sn-glycero-3-phosphoethanolamine + S-adenosyl-L-methionine = a 1,2-diacyl-sn-glycero-3-phospho-N-methylethanolamine + S-adenosyl-L-homocysteine + H(+). The enzyme catalyses 1,2-di-(9Z-octadecenoyl)-sn-glycero-3-phosphoethanolamine + S-adenosyl-L-methionine = 1,2-di-(9Z-octadecenoyl)-sn-glycero-3-phospho-N-methylethanolamine + S-adenosyl-L-homocysteine + H(+). The catalysed reaction is 1,2-di-(9Z-octadecenoyl)-sn-glycero-3-phospho-N-methylethanolamine + S-adenosyl-L-methionine = 1,2-di-(9Z-octadecenoyl)-sn-glycero-3-phospho-N,N-dimethylethanolamine + S-adenosyl-L-homocysteine + H(+). It carries out the reaction 1,2-di-(9Z-octadecenoyl)-sn-glycero-3-phospho-N,N-dimethylethanolamine + S-adenosyl-L-methionine = 1,2-di-(9Z-octadecenoyl)-sn-glycero-3-phosphocholine + S-adenosyl-L-homocysteine + H(+). It catalyses the reaction 1,2-di-(9Z,12Z-octadecadienoyl)-sn-glycero-3-phosphoethanolamine + S-adenosyl-L-methionine = 1,2-di-(9Z,12Z-octadecadienoyl)-sn-glycero-3-phospho-N-methylethanolamine + S-adenosyl-L-homocysteine + H(+). The enzyme catalyses 1,2-di-(9Z,12Z-octadecadienoyl)-sn-glycero-3-phospho-N-methylethanolamine + S-adenosyl-L-methionine = 1,2-di-(9Z,12Z-octadecadienoyl)-sn-glycero-3-phospho-N,N-dimethylethanolamine + S-adenosyl-L-homocysteine + H(+). The catalysed reaction is 1,2-di-(9Z,12Z-octadecadienoyl)-sn-glycero-3-phospho-N,N-dimethylethanolamine + S-adenosyl-L-methionine = 1,2-di-(9Z,12Z-octadecadienoyl)-sn-glycero-3-phosphocholine + S-adenosyl-L-homocysteine + H(+). It carries out the reaction 1,2-di-(9Z,12Z,15Z-octadecatrienoyl)-sn-glycero-3-phosphoethanolamine + S-adenosyl-L-methionine = 1,2-di-(9Z,12Z,15Z-octadecatrienoyl)-sn-glycero-3-phospho-N-methylethanolamine + S-adenosyl-L-homocysteine + H(+). It catalyses the reaction 1,2-di-(9Z,12Z,15Z-octadecatrienoyl)-sn-glycero-3-phospho-N-methylethanolamine + S-adenosyl-L-methionine = 1,2-di-(9Z,12Z,15Z-octadecatrienoyl)-sn-glycero-3-phospho-N,N-dimethylethanolamine + S-adenosyl-L-homocysteine + H(+). The enzyme catalyses 1,2-di-(9Z,12Z,15Z-octadecatrienoyl)-sn-glycero-3-phospho-N,N-dimethylethanolamine + S-adenosyl-L-methionine = 1,2-di-(9Z,12Z,15Z-octadecatrienoyl)-sn-glycero-3-phosphocholine + S-adenosyl-L-homocysteine + H(+). The catalysed reaction is 1-hexadecanoyl-2-(4Z,7Z,10Z,13Z,16Z,19Z-docosahexaenoyl)-sn-glycero-3-phosphoethanolamine + S-adenosyl-L-methionine = 1-hexadecanoyl-2-(4Z,7Z,10Z,13Z,16Z,19Z-docosahexaenoyl)-sn-glycero-3-phospho-N-methylethanolamine + S-adenosyl-L-homocysteine + H(+). It carries out the reaction 1-hexadecanoyl-2-(4Z,7Z,10Z,13Z,16Z,19Z-docosahexaenoyl)-sn-glycero-3-phospho-N-methylethanolamine + S-adenosyl-L-methionine = 1-hexadecanoyl-2-(4Z,7Z,10Z,13Z,16Z,19Z-docosahexaenoyl)-sn-glycero-3-phospho-N,N-dimethylethanolamine + S-adenosyl-L-homocysteine + H(+). It catalyses the reaction 1-hexadecanoyl-2-(4Z,7Z,10Z,13Z,16Z,19Z-docosahexaenoyl)-sn-glycero-3-phospho-N,N-dimethylethanolamine + S-adenosyl-L-methionine = 1-hexadecanoyl-2-(4Z,7Z,10Z,13Z,16Z,19Z-docosahexaenoyl)-sn-glycero-3-phosphocholine + S-adenosyl-L-homocysteine + H(+). It functions in the pathway phospholipid metabolism; phosphatidylcholine biosynthesis. With respect to regulation, the first methylation is rate-limiting. Functionally, catalyzes the three sequential steps of the methylation pathway for the biosynthesis of phosphatidylcholine, a critical and essential component for membrane structure. Uses S-adenosylmethionine (S-adenosyl-L-methionine, SAM or AdoMet) as the methyl group donor for the methylation of phosphatidylethanolamine (1,2-diacyl-sn-glycero-3-phosphoethanolamine, PE) to phosphatidylmonomethylethanolamine (1,2-diacyl-sn-glycero-3-phospho-N-methylethanolamine, PMME), PMME to phosphatidyldimethylethanolamine (1,2-diacyl-sn-glycero-3-phospho-N,N-dimethylethanolamine, PDME), and PDME to phosphatidylcholine (1,2-diacyl-sn-glycero-3-phosphocholine, PC), producing S-adenosyl-L-homocysteine in each step. Responsible for approximately 30% of hepatic PC with the CDP-choline pathway accounting for the other 70%. Catalyzes the three sequential steps of the methylation of 1,2-diacyl-sn-glycero-3-phospho-N-methylethanolamine (PMME) to 1,2-diacyl-sn-glycero-3-phospho-N,N-dimethylethanolamine (PDME) more efficiently than isoform 2. Induces increase in PC species with longer polyunsaturated chains than isoform 2. In terms of biological role, produces a higher increase in the level of PC species containing long chains with three double bonds than isoform 1. In Homo sapiens (Human), this protein is Phosphatidylethanolamine N-methyltransferase.